Consider the following 214-residue polypeptide: Probable nicotinate-nucleotide adenylyltransferase (214 aa).

It belongs to the NadD family.

It carries out the reaction nicotinate beta-D-ribonucleotide + ATP + H(+) = deamido-NAD(+) + diphosphate. Its pathway is cofactor biosynthesis; NAD(+) biosynthesis; deamido-NAD(+) from nicotinate D-ribonucleotide: step 1/1. Its function is as follows. Catalyzes the reversible adenylation of nicotinate mononucleotide (NaMN) to nicotinic acid adenine dinucleotide (NaAD). The polypeptide is Probable nicotinate-nucleotide adenylyltransferase (Buchnera aphidicola subsp. Acyrthosiphon pisum (strain Tuc7)).